The following is a 409-amino-acid chain: Argininosuccinate synthase (409 aa).

Residues 11 to 19 (AYSGGLDTS) and A38 each bind ATP. Residues Y91 and S96 each contribute to the L-citrulline site. G121 contributes to the ATP binding site. L-aspartate-binding residues include T123, N127, and D128. N127 is an L-citrulline binding site. Residues R131, S182, S191, E267, and Y279 each coordinate L-citrulline.

Belongs to the argininosuccinate synthase family. Type 1 subfamily. Homotetramer.

It localises to the cytoplasm. It catalyses the reaction L-citrulline + L-aspartate + ATP = 2-(N(omega)-L-arginino)succinate + AMP + diphosphate + H(+). Its pathway is amino-acid biosynthesis; L-arginine biosynthesis; L-arginine from L-ornithine and carbamoyl phosphate: step 2/3. This Xanthobacter autotrophicus (strain ATCC BAA-1158 / Py2) protein is Argininosuccinate synthase.